We begin with the raw amino-acid sequence, 94 residues long: Dynein light chain, cytoplasmic (94 aa).

This sequence belongs to the dynein light chain family. In terms of assembly, homodimer. Cytoplasmic dynein consists of two catalytic heavy chains (HCs) and a number of non-catalytic subunits which present intermediate chains (ICs), light intermediate chains (LICs) and light chains (LCs). Component of the nuclear pore complex (NPC). The nuclear pore complex constitutes the exclusive means of nucleocytoplasmic transport. NPCs allow the passive diffusion of ions and small molecules and the active, nuclear transport receptor-mediated bidirectional transport of macromolecules such as proteins, RNAs, ribonucleoparticles (RNPs), and ribosomal subunits across the nuclear envelope. Due to its 8-fold rotational symmetry, all subunits are present with 8 copies or multiples thereof.

The protein resides in the cytoplasm. It localises to the cytoskeleton. It is found in the nucleus. Its subcellular location is the nuclear pore complex. Functionally, acts as one of several non-catalytic accessory components of the cytoplasmic dynein complex that are thought to be involved in linking dynein to cargos and to adapter proteins that regulate dynein function. Cytoplasmic dynein 1 acts as a motor for the intracellular retrograde motility of vesicles and organelles along microtubules. May play a role in changing or maintaining the spatial distribution of cytoskeletal structures. Also a component of the nuclear pore complex. This is Dynein light chain, cytoplasmic (nudG) from Emericella nidulans (strain FGSC A4 / ATCC 38163 / CBS 112.46 / NRRL 194 / M139) (Aspergillus nidulans).